Here is a 259-residue protein sequence, read N- to C-terminus: UDP-2,3-diacylglucosamine hydrolase (259 aa).

Mn(2+) contacts are provided by D8, H10, D41, N79, and H114. 79–80 (NR) contributes to the substrate binding site. Substrate contacts are provided by D122, S160, N164, K167, and H195. Residues H195 and H197 each coordinate Mn(2+).

The protein belongs to the LpxH family. Requires Mn(2+) as cofactor.

The protein localises to the cell inner membrane. It carries out the reaction UDP-2-N,3-O-bis[(3R)-3-hydroxytetradecanoyl]-alpha-D-glucosamine + H2O = 2-N,3-O-bis[(3R)-3-hydroxytetradecanoyl]-alpha-D-glucosaminyl 1-phosphate + UMP + 2 H(+). It functions in the pathway glycolipid biosynthesis; lipid IV(A) biosynthesis; lipid IV(A) from (3R)-3-hydroxytetradecanoyl-[acyl-carrier-protein] and UDP-N-acetyl-alpha-D-glucosamine: step 4/6. Functionally, hydrolyzes the pyrophosphate bond of UDP-2,3-diacylglucosamine to yield 2,3-diacylglucosamine 1-phosphate (lipid X) and UMP by catalyzing the attack of water at the alpha-P atom. Involved in the biosynthesis of lipid A, a phosphorylated glycolipid that anchors the lipopolysaccharide to the outer membrane of the cell. This is UDP-2,3-diacylglucosamine hydrolase from Edwardsiella ictaluri (strain 93-146).